Here is a 115-residue protein sequence, read N- to C-terminus: NADH-ubiquinone oxidoreductase chain 3 (115 aa).

3 helical membrane passes run 4–24 (LVAL…AFWL), 55–75 (FFLV…LLPL), and 87–107 (MMLT…YEWM).

Belongs to the complex I subunit 3 family. In terms of assembly, core subunit of respiratory chain NADH dehydrogenase (Complex I) which is composed of 45 different subunits. Interacts with TMEM186. Interacts with TMEM242.

It localises to the mitochondrion inner membrane. It carries out the reaction a ubiquinone + NADH + 5 H(+)(in) = a ubiquinol + NAD(+) + 4 H(+)(out). Its function is as follows. Core subunit of the mitochondrial membrane respiratory chain NADH dehydrogenase (Complex I) which catalyzes electron transfer from NADH through the respiratory chain, using ubiquinone as an electron acceptor. Essential for the catalytic activity of complex I. This Habromys lophurus (Crested-tailed deer mouse) protein is NADH-ubiquinone oxidoreductase chain 3.